Consider the following 192-residue polypeptide: ADP-ribose glycohydrolase AF_1521 (192 aa).

The Macro domain occupies 1-192 (MEVLFEAKVG…VALKVFERSL (192 aa)). Substrate contacts are provided by residues 19–21 (GDI), 32–34 (AAN), 39–44 (HGGGVA), and 140–146 (VSAGIYG).

The catalysed reaction is 5-O-(ADP-D-ribosyl)-L-glutamyl-[protein] + H2O = L-glutamyl-[protein] + ADP-D-ribose + H(+). It carries out the reaction 4-O-(ADP-D-ribosyl)-L-aspartyl-[protein] + H2O = L-aspartyl-[protein] + ADP-D-ribose + H(+). It catalyses the reaction alpha-NAD(+) + H2O = ADP-D-ribose + nicotinamide + H(+). Functionally, removes ADP-ribose from aspartate and glutamate residues in proteins bearing a single ADP-ribose moiety. Inactive towards proteins bearing poly-ADP-ribose. Catalyzes removal of a phosphate group from ADP-ribose 1''-phosphate (Appr1p), but with low efficiency. The polypeptide is ADP-ribose glycohydrolase AF_1521 (Archaeoglobus fulgidus (strain ATCC 49558 / DSM 4304 / JCM 9628 / NBRC 100126 / VC-16)).